Consider the following 816-residue polypeptide: Phosphatidylinositol 4-kinase beta (816 aa).

Disordered regions lie at residues 1–28 (MGDT…NGGS), 93–120 (PPTG…RRRR), and 249–318 (HRKR…SFSS). An N-acetylglycine modification is found at Gly-2. Residues 2–68 (GDTVVAPAPL…VKLSHGGVAS (67 aa)) form an interaction with ACBD3 region. The PIK helical domain maps to 49–242 (QKACQEVLQK…GTKLRRLILS (194 aa)). At Ser-258 the chain carries Phosphoserine. Thr-263 is subject to Phosphothreonine. Residues Ser-266, Ser-275, Ser-277, Ser-284, Ser-294, Ser-428, and Ser-511 each carry the phosphoserine modification. Positions 278–294 (DATASISLSSSLKRTAS) are enriched in low complexity. 2 positions are modified to phosphothreonine: Thr-517 and Thr-519. The 267-residue stretch at 535-801 (EPWQEKVRRI…MVDGSMRSIT (267 aa)) folds into the PI3K/PI4K catalytic domain. The segment at 541–547 (VRRIREG) is G-loop. The interval 668 to 676 (QVKDRHNGN) is catalytic loop. The activation loop stretch occupies residues 687–711 (HIDFGFILSSSPRNLGFETSAFKLT).

This sequence belongs to the PI3/PI4-kinase family. Type III PI4K subfamily. As to quaternary structure, interacts with ARF1 and ARF3 in the Golgi complex, but not with ARF4, ARF5 or ARF6. Interacts with NCS1/FREQ in a calcium-independent manner. Interacts with CALN1/CABP8 and CALN2/CABP7; in a calcium-dependent manner; this interaction competes with NCS1/FREQ binding. Interacts with ACBD3. Interacts with ARMH3, YWHAB, YWHAE, YWHAG, YWHAH, YWHAQ, YWHAZ and SFN. Interacts with GGA2 (via VHS domain); the interaction is important for PI4KB location at the Golgi apparatus membrane. Interacts with ATG9A. It depends on Mg(2+) as a cofactor. The cofactor is Mn(2+).

Its subcellular location is the endomembrane system. It is found in the mitochondrion outer membrane. The protein resides in the rough endoplasmic reticulum membrane. The protein localises to the golgi apparatus. It localises to the golgi apparatus membrane. The enzyme catalyses a 1,2-diacyl-sn-glycero-3-phospho-(1D-myo-inositol) + ATP = a 1,2-diacyl-sn-glycero-3-phospho-(1D-myo-inositol 4-phosphate) + ADP + H(+). Inhibited by wortmannin. Increased kinase activity upon interaction with NCS1/FREQ. In terms of biological role, phosphorylates phosphatidylinositol (PI) in the first committed step in the production of the second messenger inositol-1,4,5,-trisphosphate (PIP). May regulate Golgi disintegration/reorganization during mitosis, possibly via its phosphorylation. Involved in Golgi-to-plasma membrane trafficking. May play an important role in the inner ear development. The sequence is that of Phosphatidylinositol 4-kinase beta (PI4KB) from Rhinolophus ferrumequinum (Greater horseshoe bat).